Here is a 257-residue protein sequence, read N- to C-terminus: NAD kinase (257 aa).

Asp46 (proton acceptor) is an active-site residue. Residues 46–47 (DG), 116–117 (NE), Asp146, Ala154, 157–162 (TAYNLS), and Asn218 contribute to the NAD(+) site.

Belongs to the NAD kinase family. A divalent metal cation serves as cofactor.

The protein resides in the cytoplasm. The catalysed reaction is NAD(+) + ATP = ADP + NADP(+) + H(+). Its function is as follows. Involved in the regulation of the intracellular balance of NAD and NADP, and is a key enzyme in the biosynthesis of NADP. Catalyzes specifically the phosphorylation on 2'-hydroxyl of the adenosine moiety of NAD to yield NADP. The polypeptide is NAD kinase (Brucella melitensis biotype 1 (strain ATCC 23456 / CCUG 17765 / NCTC 10094 / 16M)).